Reading from the N-terminus, the 374-residue chain is S-adenosylmethionine:tRNA ribosyltransferase-isomerase (374 aa).

The protein belongs to the QueA family. In terms of assembly, monomer.

The protein localises to the cytoplasm. The enzyme catalyses 7-aminomethyl-7-carbaguanosine(34) in tRNA + S-adenosyl-L-methionine = epoxyqueuosine(34) in tRNA + adenine + L-methionine + 2 H(+). It functions in the pathway tRNA modification; tRNA-queuosine biosynthesis. Its function is as follows. Transfers and isomerizes the ribose moiety from AdoMet to the 7-aminomethyl group of 7-deazaguanine (preQ1-tRNA) to give epoxyqueuosine (oQ-tRNA). This chain is S-adenosylmethionine:tRNA ribosyltransferase-isomerase, found in Prochlorococcus marinus (strain MIT 9215).